The sequence spans 412 residues: MVLKRKGLLIILDGLGDRPIKELNGLTPLEYANTPNMDKLAEIGILGQQDPIKPGQPAGSDTAHLSIFGYDPYETYRGRGFFEALGVGLDLSKDDLAFRVNFATLENGIITDRRAGRISTEEAHELARAIQEEVDIGVDFIFKGATGHRAVLVLKGMSRGYKVGDNDPHEAGKPPLKFSYEDEDSKKVAEILEEFVKKAQEVLEKHPINERRRKEGKPIANYLLIRGAGTYPNIPMKFTEQWKVKAAGVIAVALVKGVARAVGFDVYTPEGATGEYNTNEMAKAKKAVELLKDYDFVFLHFKPTDAAGHDNKPKLKAELIERADRMIGYILDHVDLEEVVIAITGDHSTPCEVMNHSGDPVPLLIAGGGVRTDDTKRFGEREAMKGGLGRIRGHDIVPIMMDLMNRSEKFGA.

The protein belongs to the BPG-independent phosphoglycerate mutase family. A-PGAM subfamily.

The enzyme catalyses (2R)-2-phosphoglycerate = (2R)-3-phosphoglycerate. It participates in carbohydrate degradation; glycolysis; pyruvate from D-glyceraldehyde 3-phosphate: step 3/5. Functionally, catalyzes the interconversion of 2-phosphoglycerate and 3-phosphoglycerate. The polypeptide is 2,3-bisphosphoglycerate-independent phosphoglycerate mutase (apgM) (Pyrococcus horikoshii (strain ATCC 700860 / DSM 12428 / JCM 9974 / NBRC 100139 / OT-3)).